The primary structure comprises 550 residues: Glucose-6-phosphate isomerase (550 aa).

E356 (proton donor) is an active-site residue. Active-site residues include H387 and K515.

This sequence belongs to the GPI family.

Its subcellular location is the cytoplasm. It carries out the reaction alpha-D-glucose 6-phosphate = beta-D-fructose 6-phosphate. It participates in carbohydrate biosynthesis; gluconeogenesis. The protein operates within carbohydrate degradation; glycolysis; D-glyceraldehyde 3-phosphate and glycerone phosphate from D-glucose: step 2/4. In terms of biological role, catalyzes the reversible isomerization of glucose-6-phosphate to fructose-6-phosphate. In Aliivibrio salmonicida (strain LFI1238) (Vibrio salmonicida (strain LFI1238)), this protein is Glucose-6-phosphate isomerase.